A 640-amino-acid chain; its full sequence is SUMO-activating enzyme subunit 2 (640 aa).

ATP-binding positions include glycine 24–glycine 29, aspartate 48, asparagine 56–arginine 59, lysine 72, serine 95–isoleucine 96, and aspartate 117–arginine 122. Zn(2+) contacts are provided by cysteine 158 and cysteine 161. Lysine 164 participates in a covalent cross-link: Glycyl lysine isopeptide (Lys-Gly) (interchain with G-Cter in SUMO1). Residue cysteine 173 is the Glycyl thioester intermediate of the active site. Lysine 190 is covalently cross-linked (Glycyl lysine isopeptide (Lys-Gly) (interchain with G-Cter in SUMO)). The interval alanine 202–glutamate 231 is disordered. At serine 207 the chain carries Phosphoserine. Residues alanine 222–glutamate 231 are compositionally biased toward basic and acidic residues. Lysine 236 is covalently cross-linked (Glycyl lysine isopeptide (Lys-Gly) (interchain with G-Cter in SUMO1); alternate). Residues lysine 236 and lysine 257 each participate in a glycyl lysine isopeptide (Lys-Gly) (interchain with G-Cter in SUMO2); alternate cross-link. Glycyl lysine isopeptide (Lys-Gly) (interchain with G-Cter in SUMO); alternate cross-links involve residues lysine 257 and lysine 271. Lysine 271 bears the N6-acetyllysine; alternate mark. Lysine 275 is covalently cross-linked (Glycyl lysine isopeptide (Lys-Gly) (interchain with G-Cter in SUMO)). A Glycyl lysine isopeptide (Lys-Gly) (interchain with G-Cter in SUMO2) cross-link involves residue lysine 371. A Glycyl lysine isopeptide (Lys-Gly) (interchain with G-Cter in SUMO1); alternate cross-link involves residue lysine 420. Lysine 420 is covalently cross-linked (Glycyl lysine isopeptide (Lys-Gly) (interchain with G-Cter in SUMO2); alternate). Zn(2+) is bound by residues cysteine 441 and cysteine 444. Serine 507 is modified (phosphoserine). A Glycyl lysine isopeptide (Lys-Gly) (interchain with G-Cter in SUMO2) cross-link involves residue lysine 540. The segment covering proline 551–alanine 563 has biased composition (basic and acidic residues). Positions proline 551–aspartate 640 are disordered. Residues serine 565–glutamine 582 are compositionally biased toward polar residues. A compositionally biased stretch (acidic residues) spans glutamate 583–serine 597. Position 592 is a phosphoserine (serine 592). The span at glutamate 606 to lysine 630 shows a compositional bias: basic and acidic residues. Residue lysine 611 forms a Glycyl lysine isopeptide (Lys-Gly) (interchain with G-Cter in SUMO) linkage. Residue lysine 613 forms a Glycyl lysine isopeptide (Lys-Gly) (interchain with G-Cter in SUMO); alternate linkage. Residue lysine 613 is modified to N6-acetyllysine; alternate. Residues lysine 617 and lysine 623 each participate in a glycyl lysine isopeptide (Lys-Gly) (interchain with G-Cter in SUMO) cross-link. The segment covering glutamate 631–aspartate 640 has biased composition (acidic residues).

It belongs to the ubiquitin-activating E1 family. Heterodimer of SAE1 and UBA2/SAE2. The heterodimer corresponds to the two domains that are encoded on a single polypeptide chain in ubiquitin-activating enzyme E1. Interacts with UBE2I. Post-translationally, sumoylated with SUMO1 and SUMO2/3 and by UBC9. Sumoylation at Lys-236 inhibits enzymatic activity. Sumoylation at the C-terminal lysine cluster plays an essential role in nuclear trafficking.

It localises to the cytoplasm. The protein localises to the nucleus. Its pathway is protein modification; protein sumoylation. Its function is as follows. The heterodimer acts as an E1 ligase for SUMO1, SUMO2, SUMO3, and probably SUMO4. It mediates ATP-dependent activation of SUMO proteins followed by formation of a thioester bond between a SUMO protein and a conserved active site cysteine residue on UBA2/SAE2. This is SUMO-activating enzyme subunit 2 (UBA2) from Homo sapiens (Human).